The sequence spans 626 residues: (+)-3-carene synthase 2, chloroplastic (626 aa).

The transit peptide at 1–45 (MSLISAVPLASSCVSKSLISSVREHTALRRAIATLQMSRRGKSVA) directs the protein to the chloroplast. 3 residues coordinate Mg(2+): D377, D381, and D529. A DDXXD motif motif is present at residues 377-381 (DDMYD).

This sequence belongs to the terpene synthase family. Tpsd subfamily. The cofactor is Mg(2+). It depends on Mn(2+) as a cofactor.

It localises to the plastid. It is found in the chloroplast. The enzyme catalyses (2E)-geranyl diphosphate = (+)-car-3-ene + diphosphate. It participates in terpene metabolism; oleoresin biosynthesis. Its pathway is secondary metabolite biosynthesis; terpenoid biosynthesis. In terms of biological role, monoterpene synthase (TPS) involved in the biosynthesis of monoterpene natural products included in conifer oleoresin secretions and volatile emissions; these compounds contribute to biotic and abiotic stress defense against herbivores and pathogens. Catalyzes the conversion of (2E)-geranyl diphosphate (GPP) to (+)-3-carene. The polypeptide is (+)-3-carene synthase 2, chloroplastic (Pinus banksiana (Jack pine)).